A 220-amino-acid polypeptide reads, in one-letter code: ATP-dependent dethiobiotin synthetase BioD (220 aa).

11 to 16 (GVGKTF) is an ATP binding site. Position 15 (Thr15) interacts with Mg(2+). Residue Lys36 is part of the active site. Position 40 (Thr40) interacts with substrate. ATP-binding positions include Asp48 and 107-110 (EGAG). Residues Asp48 and Glu107 each contribute to the Mg(2+) site.

This sequence belongs to the dethiobiotin synthetase family. Homodimer. Mg(2+) is required as a cofactor.

Its subcellular location is the cytoplasm. The enzyme catalyses (7R,8S)-7,8-diammoniononanoate + CO2 + ATP = (4R,5S)-dethiobiotin + ADP + phosphate + 3 H(+). It functions in the pathway cofactor biosynthesis; biotin biosynthesis; biotin from 7,8-diaminononanoate: step 1/2. Catalyzes a mechanistically unusual reaction, the ATP-dependent insertion of CO2 between the N7 and N8 nitrogen atoms of 7,8-diaminopelargonic acid (DAPA, also called 7,8-diammoniononanoate) to form a ureido ring. The protein is ATP-dependent dethiobiotin synthetase BioD of Aquifex aeolicus (strain VF5).